The following is a 293-amino-acid chain: Protein YIF1A (293 aa).

A disordered region spans residues 1–27 (MAYHSAYGVHGSKHRTRAAPDPPPLFD). Ala2 is subject to N-acetylalanine. Topologically, residues 2 to 138 (AYHSAYGVHG…PPRKDLNAPD (137 aa)) are cytoplasmic. Ser12 carries the post-translational modification Phosphoserine. A helical membrane pass occupies residues 139-159 (LYIPTMAFITYVLLAGMALGI). At 160–174 (QQRFSPEVLGLCAST) the chain is on the lumenal side. Residues 175-195 (ALVWVFMEVLALLLGLYLATV) traverse the membrane as a helical segment. The Cytoplasmic segment spans residues 196–203 (RSELSTFH). The chain crosses the membrane as a helical span at residues 204–226 (LLAYSGYKYVGMILSVLTGLLFG). The Lumenal portion of the chain corresponds to 227–229 (SDG). A helical transmembrane segment spans residues 230–249 (YYVALAWTSSALMYFIVRSL). Residues 250 to 271 (RTAASGPDSMGGPAPRQRLQLY) lie on the Cytoplasmic side of the membrane. The helical transmembrane segment at 272–292 (LTLGAAAFQPLIIYWLTFHLV) threads the bilayer.

The protein belongs to the YIF1 family. In terms of assembly, interacts with YIPF5.

Its subcellular location is the endoplasmic reticulum membrane. The protein localises to the golgi apparatus membrane. It localises to the endoplasmic reticulum-Golgi intermediate compartment membrane. Its function is as follows. Possible role in transport between endoplasmic reticulum and Golgi. The sequence is that of Protein YIF1A (Yif1a) from Mus musculus (Mouse).